Reading from the N-terminus, the 351-residue chain is S-adenosylmethionine:tRNA ribosyltransferase-isomerase (351 aa).

Belongs to the QueA family. Monomer.

It localises to the cytoplasm. The enzyme catalyses 7-aminomethyl-7-carbaguanosine(34) in tRNA + S-adenosyl-L-methionine = epoxyqueuosine(34) in tRNA + adenine + L-methionine + 2 H(+). It functions in the pathway tRNA modification; tRNA-queuosine biosynthesis. Transfers and isomerizes the ribose moiety from AdoMet to the 7-aminomethyl group of 7-deazaguanine (preQ1-tRNA) to give epoxyqueuosine (oQ-tRNA). The polypeptide is S-adenosylmethionine:tRNA ribosyltransferase-isomerase (Hydrogenovibrio crunogenus (strain DSM 25203 / XCL-2) (Thiomicrospira crunogena)).